Reading from the N-terminus, the 388-residue chain is Processive diacylglycerol beta-glucosyltransferase (388 aa).

The protein belongs to the glycosyltransferase 28 family. UgtP subfamily.

The protein resides in the cell membrane. It carries out the reaction a 1,2-diacyl-3-O-(beta-D-glucopyranosyl)-sn-glycerol + UDP-alpha-D-glucose = a 1,2-diacyl-3-O-(beta-D-Glc-(1-&gt;6)-beta-D-Glc)-sn-glycerol + UDP + H(+). The enzyme catalyses a 1,2-diacyl-3-O-(beta-D-Glc-(1-&gt;6)-beta-D-Glc)-sn-glycerol + UDP-alpha-D-glucose = a 1,2-diacyl-3-O-(beta-D-Glc-(1-&gt;6)-beta-D-Glc-(1-&gt;6)-beta-D-Glc)-sn-glycerol + UDP + H(+). It catalyses the reaction a 1,2-diacyl-sn-glycerol + UDP-alpha-D-glucose = a 1,2-diacyl-3-O-(beta-D-glucopyranosyl)-sn-glycerol + UDP + H(+). It participates in glycolipid metabolism; diglucosyl-diacylglycerol biosynthesis. In terms of biological role, processive glucosyltransferase involved in the biosynthesis of both the bilayer- and non-bilayer-forming membrane glucolipids. Is able to successively transfer up to three glucosyl residues to diacylglycerol (DAG), thereby catalyzing the formation of beta-monoglucosyl-DAG (3-O-(beta-D-glucopyranosyl)-1,2-diacyl-sn-glycerol), beta-diglucosyl-DAG (3-O-(beta-D-glucopyranosyl-beta-(1-&gt;6)-D-glucopyranosyl)-1,2-diacyl-sn-glycerol) and beta-triglucosyl-DAG (3-O-(beta-D-glucopyranosyl-beta-(1-&gt;6)-D-glucopyranosyl-beta-(1-&gt;6)-D-glucopyranosyl)-1,2-diacyl-sn-glycerol). Beta-diglucosyl-DAG is the predominant glycolipid found in Bacillales and is also used as a membrane anchor for lipoteichoic acid (LTA). The polypeptide is Processive diacylglycerol beta-glucosyltransferase (Bacillus cereus (strain G9842)).